Here is a 442-residue protein sequence, read N- to C-terminus: Transposase InsG for insertion sequence element IS4 (442 aa).

Belongs to the transposase 11 family.

Involved in the transposition of the insertion sequence IS4. This is Transposase InsG for insertion sequence element IS4 (insG) from Escherichia coli (strain K12).